The sequence spans 169 residues: S-ribosylhomocysteine lyase (169 aa).

Residues H54, H58, and C128 each coordinate Fe cation.

The protein belongs to the LuxS family. Homodimer. Requires Fe cation as cofactor.

It carries out the reaction S-(5-deoxy-D-ribos-5-yl)-L-homocysteine = (S)-4,5-dihydroxypentane-2,3-dione + L-homocysteine. In terms of biological role, involved in the synthesis of autoinducer 2 (AI-2) which is secreted by bacteria and is used to communicate both the cell density and the metabolic potential of the environment. The regulation of gene expression in response to changes in cell density is called quorum sensing. Catalyzes the transformation of S-ribosylhomocysteine (RHC) to homocysteine (HC) and 4,5-dihydroxy-2,3-pentadione (DPD). This is S-ribosylhomocysteine lyase from Shewanella piezotolerans (strain WP3 / JCM 13877).